The following is a 282-amino-acid chain: 3-oxoadipate CoA-transferase subunit A (282 aa).

This sequence belongs to the 3-oxoacid CoA-transferase subunit A family. As to quaternary structure, heterotetramer composed of 2 A and 2 B subunits.

The enzyme catalyses 3-oxoadipate + succinyl-CoA = 3-oxoadipyl-CoA + succinate. It functions in the pathway aromatic compound metabolism; beta-ketoadipate pathway; acetyl-CoA and succinyl-CoA from 3-oxoadipate: step 1/2. Its function is as follows. Catalyzes the CoA transfer from succinate to 3-oxoadipate (beta-ketoadipate). This Pseudomonas knackmussii (strain DSM 6978 / CCUG 54928 / LMG 23759 / B13) protein is 3-oxoadipate CoA-transferase subunit A (catI).